A 383-amino-acid chain; its full sequence is Heme A synthase (383 aa).

Transmembrane regions (helical) follow at residues 38 to 58 (VRVW…VGGL), 127 to 147 (VIGL…KIPP), 153 to 173 (LFLL…MVAS), 187 to 207 (LATH…YIMV), 230 to 250 (ANWL…VAGI), 287 to 307 (LVQF…LYVW), 321 to 341 (AFDW…VTVL), and 344 to 364 (APWT…CLIL). Histidine 292 lines the heme pocket. Heme is bound at residue histidine 352.

This sequence belongs to the COX15/CtaA family. Type 2 subfamily. In terms of assembly, interacts with CtaB. Heme b is required as a cofactor.

Its subcellular location is the cell membrane. The catalysed reaction is Fe(II)-heme o + 2 A + H2O = Fe(II)-heme a + 2 AH2. It functions in the pathway porphyrin-containing compound metabolism; heme A biosynthesis; heme A from heme O: step 1/1. Catalyzes the conversion of heme O to heme A by two successive hydroxylations of the methyl group at C8. The first hydroxylation forms heme I, the second hydroxylation results in an unstable dihydroxymethyl group, which spontaneously dehydrates, resulting in the formyl group of heme A. This is Heme A synthase from Dinoroseobacter shibae (strain DSM 16493 / NCIMB 14021 / DFL 12).